Here is a 125-residue protein sequence, read N- to C-terminus: Small ribosomal subunit protein bS6 (125 aa).

The protein belongs to the bacterial ribosomal protein bS6 family.

Binds together with bS18 to 16S ribosomal RNA. This chain is Small ribosomal subunit protein bS6, found in Campylobacter jejuni subsp. jejuni serotype O:23/36 (strain 81-176).